The following is a 272-amino-acid chain: HMP-PP phosphatase (272 aa).

Aspartate 8 (nucleophile) is an active-site residue. Mg(2+) contacts are provided by aspartate 8, aspartate 10, and aspartate 212.

Belongs to the HAD-like hydrolase superfamily. Cof family. It depends on Mg(2+) as a cofactor.

The enzyme catalyses 4-amino-2-methyl-5-(diphosphooxymethyl)pyrimidine + H2O = 4-amino-2-methyl-5-(phosphooxymethyl)pyrimidine + phosphate + H(+). Its function is as follows. Catalyzes the hydrolysis of 4-amino-2-methyl-5-hydroxymethylpyrimidine pyrophosphate (HMP-PP) to 4-amino-2-methyl-5-hydroxymethylpyrimidine phosphate (HMP-P). In Escherichia coli O81 (strain ED1a), this protein is HMP-PP phosphatase.